The primary structure comprises 213 residues: mRNA-decapping protein D9 (213 aa).

One can recognise a Nudix hydrolase domain in the interval 30 to 209 (KDTHVFAACI…EYLSYIYNML (180 aa)). The short motif at 111–132 (GKLDKKESIKDCLRRELKEESD) is the Nudix box element. Residue E117 coordinates Mg(2+). The Nucleophile role is filled by E126. Residues E130 and D151 each contribute to the Mg(2+) site.

Belongs to the Nudix hydrolase family. Requires Mg(2+) as cofactor. Mn(2+) serves as cofactor.

Its function is as follows. Decapping enzyme required for the removal of the 5'-end m7GpppN cap tethered to viral and host mRNAs to allow their decay in cells. May therefore accelerate viral and cellular mRNA turnover to eliminate competing host mRNAs and allow stage-specific synthesis of viral proteins. Acceleration of the turnover of cellular transcripts may even promote the shutoff of host protein synthesis. Does not cleave unmethylated RNAs or RNAs shorter than 24 nucleotides. In Homo sapiens (Human), this protein is mRNA-decapping protein D9.